Consider the following 282-residue polypeptide: Bifunctional protein FolD (282 aa).

Residues 165-167 (GRS), Ser-190, and Thr-231 contribute to the NADP(+) site.

Belongs to the tetrahydrofolate dehydrogenase/cyclohydrolase family. In terms of assembly, homodimer.

It carries out the reaction (6R)-5,10-methylene-5,6,7,8-tetrahydrofolate + NADP(+) = (6R)-5,10-methenyltetrahydrofolate + NADPH. The catalysed reaction is (6R)-5,10-methenyltetrahydrofolate + H2O = (6R)-10-formyltetrahydrofolate + H(+). Its pathway is one-carbon metabolism; tetrahydrofolate interconversion. Its function is as follows. Catalyzes the oxidation of 5,10-methylenetetrahydrofolate to 5,10-methenyltetrahydrofolate and then the hydrolysis of 5,10-methenyltetrahydrofolate to 10-formyltetrahydrofolate. This Clostridium botulinum (strain Eklund 17B / Type B) protein is Bifunctional protein FolD.